Reading from the N-terminus, the 292-residue chain is 4-hydroxy-tetrahydrodipicolinate synthase (292 aa).

A pyruvate-binding site is contributed by threonine 45. Tyrosine 133 (proton donor/acceptor) is an active-site residue. Catalysis depends on lysine 161, which acts as the Schiff-base intermediate with substrate. Isoleucine 203 is a pyruvate binding site.

The protein belongs to the DapA family. As to quaternary structure, homodimer.

The protein localises to the cytoplasm. The enzyme catalyses L-aspartate 4-semialdehyde + pyruvate = (2S,4S)-4-hydroxy-2,3,4,5-tetrahydrodipicolinate + H2O + H(+). The protein operates within amino-acid biosynthesis; L-lysine biosynthesis via DAP pathway; (S)-tetrahydrodipicolinate from L-aspartate: step 3/4. In terms of biological role, catalyzes the condensation of (S)-aspartate-beta-semialdehyde [(S)-ASA] and pyruvate to 4-hydroxy-tetrahydrodipicolinate (HTPA). In Stutzerimonas stutzeri (strain A1501) (Pseudomonas stutzeri), this protein is 4-hydroxy-tetrahydrodipicolinate synthase.